Reading from the N-terminus, the 8922-residue chain is Protein clarinet (8922 aa).

Residues 11-35 (SKGPPLEEVREESEEDAQVPEQVVS) form a disordered region. A compositionally biased stretch (acidic residues) spans 19–28 (VREESEEDAQ). Residues 385-405 (KDETKLILKSVEDKLETTEIE) adopt a coiled-coil conformation. 55 disordered regions span residues 527–579 (QEAA…EPEL), 622–673 (IVIS…EPEL), 687–860 (LAEK…KEPE), 880–955 (SFEQ…EPEL), 971–1049 (EQSS…EPEL), 1062–1139 (SSAE…MESR), 1151–1331 (IARI…EPEL), 1347–1420 (EQSS…VMES), 1444–1520 (SFEQ…PELT), 1538–1619 (SFEQ…EEID), 1632–1710 (SFEQ…LTQE), 1726–1801 (SFEQ…VPEL), 1820–1898 (SFEQ…LTQE), 1939–1992 (VISE…LTQE), 2032–2084 (IVIS…SELT), 2126–2175 (IVIS…SKEP), 2194–2213 (QSSFEQASTITDRPPLPVRL), 2220–2246 (IVISEQHEGDRSSATPGADYERSYDQD), 2329–2403 (SFEQ…KKPE), 2423–2497 (SFEQ…KPEL), 2516–2594 (SFEQ…LTQE), 2610–2684 (SFEQ…KEPE), 2704–2845 (SFEQ…ERPF), 2892–2963 (SFEQ…MESK), 2983–3155 (EQSS…EPEL), 3171–3249 (EQSS…EPEL), 3268–3337 (SFEQ…PVML), 3619–3639 (SITPSEGDDGGSSETGHPTTD), 3995–4079 (AEPV…QEEI), 4117–4169 (IVIS…PELT), 4181–4271 (SLAE…STTI), 4557–4624 (QASA…TQEE), 4636–4656 (EQSSFEQASTIPDRPPLPVRL), 4666–4685 (SEQHEGDISSATSGADYERS), 4730–4801 (EQSS…GVTQ), 4855–4899 (PANP…PLQD), 5004–5036 (PEDFSEATSGADTESISETTANKKDSNDSNGLT), 5360–5379 (LAMFTNPSPSASPSLLRKES), 5390–5413 (RRSSGADSRASNDSSASRLPDTAL), 5484–5511 (KKQISSRTESTNSRVSSEGIDEEVENEV), 5540–5572 (PPIAISHPTPPHSAKTDTGSRHSSGSSAHSQFG), 6194–6303 (AEPV…ESES), 6354–6437 (DVES…GSRM), 6487–6510 (SSKSSTSLGTSAPTKSIPSPQIGI), 6577–6609 (ARFPPPSSQIPTRSPSVMSSSIMSELPPGLDDL), 6668–6691 (NAETDSSSSVITSRQPSRSPSVAR), 6728–6768 (AEFE…VPPG), 6998–7018 (TERKQREESPTRESGYATSTS), 7045–7098 (ARSR…DDFD), 7137–7175 (FDGDESELPHQDFVFNEPTTKKTSDFDFPKETDEVFEKP), 7202–7263 (EAPS…YPDR), 7313–7350 (KTTTSQTPSTSTKPTVTAPKRSDPIPIAPSQRSKEIEE), 7598–7623 (DSVRDDNERNENETTSPRGLKRSPGM), 7760–7797 (TRRHQHQQQHQAPVYITSSASRPPSAAGSNIFQESRPT), and 7842–7881 (HIRQPVSVRSPRAQTGTTQTTAASGSASNSIRPSIGSSSV). The segment covering 531–552 (SDNHEKERSSATSKADYERSFD) has biased composition (basic and acidic residues). Positions 760–776 (MESKEPELTQEEIDHIA) are enriched in basic and acidic residues. Residues 1062–1076 (SSAEQSSFEQASTVP) show a composition bias toward low complexity. Positions 1230–1244 (MESKEPELTQEEIDH) are enriched in basic and acidic residues. Residues 1251-1261 (IAEQSSFEQAS) are compositionally biased toward polar residues. Composition is skewed to basic and acidic residues over residues 1606 to 1619 (MESKEPELTQEEID) and 1700 to 1710 (MESKEPELTQE). Composition is skewed to basic and acidic residues over residues 1888-1898 (MESKEPELTQE) and 1982-1992 (MESKESELTQE). The segment covering 2194-2204 (QSSFEQASTIT) has biased composition (polar residues). A compositionally biased stretch (basic and acidic residues) spans 2584-2594 (MESKEPELTQE). Positions 2772-2788 (MESKEPELTQEEIDHIA) are enriched in basic and acidic residues. The segment covering 2793–2803 (LAEQSSFEQAS) has biased composition (polar residues). Residues 3076–3085 (APSSSFEQAS) show a composition bias toward polar residues. A compositionally biased stretch (polar residues) spans 4035–4044 (GTSFPDNAET). Residues 4065–4079 (PVMKSKEPELTQEEI) show a composition bias toward basic and acidic residues. Polar residues-rich tracts occupy residues 4182 to 4195 (LAEQSSFEQTSTIP), 4223 to 4234 (SATSGADYQQSF), and 4255 to 4271 (MESTQPELTQDHSSTTI). The segment covering 4571 to 4580 (IVEKREDDKS) has biased composition (basic and acidic residues). A compositionally biased stretch (polar residues) spans 4581–4594 (NITSGADYQQSFDQ). The span at 4613–4624 (MESKEPELTQEE) shows a compositional bias: basic and acidic residues. Residues 4636–4645 (EQSSFEQAST) are compositionally biased toward polar residues. The segment covering 4730–4739 (EQSSFEQAST) has biased composition (polar residues). Over residues 4871 to 4890 (EGSSSATSGADIPSSFDISS) the composition is skewed to low complexity. Residues 5009 to 5023 (EATSGADTESISETT) are compositionally biased toward polar residues. Over residues 5390–5407 (RRSSGADSRASNDSSASR) the composition is skewed to low complexity. Positions 5486 to 5499 (QISSRTESTNSRVS) are enriched in polar residues. A compositionally biased stretch (pro residues) spans 5540 to 5550 (PPIAISHPTPP). The segment covering 5560-5572 (RHSSGSSAHSQFG) has biased composition (low complexity). Polar residues-rich tracts occupy residues 6225–6245 (ASSGASGSFDNNNAQVLTSGF) and 6270–6284 (KTVSPTPSADSMASR). Composition is skewed to basic and acidic residues over residues 6285-6303 (KSSEYDIRSISEIRQESES) and 6376-6422 (GEGE…EESL). Polar residues predominate over residues 6494–6505 (LGTSAPTKSIPS). Residues 6590 to 6600 (SPSVMSSSIMS) show a composition bias toward low complexity. Over residues 6670-6687 (ETDSSSSVITSRQPSRSP) the composition is skewed to polar residues. Residues 6735–6747 (SQVPSRQPSRSPS) are compositionally biased toward low complexity. 2 stretches are compositionally biased toward basic and acidic residues: residues 6998-7008 (TERKQREESPT) and 7045-7069 (ARSRRDSRDEVLHRREEDPEVHTPE). Residues 7071 to 7086 (SSTAVVTDVPSVSPVT) show a composition bias toward low complexity. The segment covering 7155 to 7175 (TTKKTSDFDFPKETDEVFEKP) has biased composition (basic and acidic residues). Residues 7248 to 7260 (SDEESCSEDDEEY) are compositionally biased toward acidic residues. The span at 7313 to 7331 (KTTTSQTPSTSTKPTVTAP) shows a compositional bias: low complexity. Residues 7599–7609 (SVRDDNERNEN) are compositionally biased toward basic and acidic residues. Composition is skewed to low complexity over residues 7777–7788 (SSASRPPSAAGS) and 7854–7880 (AQTGTTQTTAASGSASNSIRPSIGSSS). The stretch at 7895–7915 (KKELKDVLIQRKQRLEATEIE) forms a coiled coil. The segment at 8510 to 8562 (SRRRAQETALTSSNKISTGSRSYARRPIRPSSYRNPEATNSMPDRHVARRTAE) is disordered. Composition is skewed to polar residues over residues 8517-8530 (TALTSSNKISTGSR) and 8541-8551 (SYRNPEATNSM). Residues 8552-8562 (PDRHVARRTAE) are compositionally biased toward basic and acidic residues. The PDZ domain occupies 8570–8661 (RILLTRSYKH…EIEMVIRTYK (92 aa)). The 122-residue stretch at 8714 to 8835 (CHGHIQVSLG…SAINTGPRWY (122 aa)) folds into the C2 domain.

In terms of tissue distribution, expressed in the nervous system.

The protein resides in the synapse. It is found in the cell projection. The protein localises to the axon. Its function is as follows. Required for synapse development in the active zone of presynaptic terminals of specific neurons including serotonergic NSM neurons. The active zone is a protein-dense neuronal region within the presynaptic bouton, from which synaptic vesicles send neurotransmitter signals across the synapse. Plays a role in the recruitment and clustering of synaptic vesicles in the active zone of presynaptic terminals in serotonergic NSM neurons, and coordinates the release of synaptic vesicles at presynaptic terminals to regulate neurotransmission at neuromuscular junctions. Regulates synapse number in inhibitory motor neurons and plays a role in spontaneous postsynaptic synaptic vesicle release in muscle cells. The chain is Protein clarinet from Caenorhabditis elegans.